Consider the following 283-residue polypeptide: 1-deoxypentalenic acid 11-beta-hydroxylase (283 aa).

Arginine 117 lines the substrate pocket. Fe cation is bound by residues histidine 135 and aspartate 137. 2-oxoglutarate contacts are provided by residues 135–137 (HQD) and tryptophan 151. Residue arginine 186 participates in substrate binding. Histidine 224 contacts Fe cation. The 2-oxoglutarate site is built by serine 226 and arginine 238. Residues 260 to 283 (WPESAKDASKGILSKITGTPTTAE) are disordered.

This sequence belongs to the PhyH family. Requires Fe cation as cofactor. L-ascorbate is required as a cofactor.

The catalysed reaction is 1-deoxypentalenate + 2-oxoglutarate + O2 = 1-deoxy-11beta-hydroxypentalenate + succinate + CO2. The protein operates within antibiotic biosynthesis; pentalenolactone biosynthesis. Catalyzes the conversion of 1-deoxypentalenic acid to 11-beta-hydroxy-1-deoxypentalenic acid in the biosynthesis of pentalenolactone antibiotic. In Streptomyces exfoliatus (Streptomyces hydrogenans), this protein is 1-deoxypentalenic acid 11-beta-hydroxylase (penH).